The chain runs to 379 residues: Cell division protein FtsZ (379 aa).

GTP contacts are provided by residues 18 to 22, 105 to 107, E136, R140, and D184; these read GGGVN and GTG.

The protein belongs to the FtsZ family. In terms of assembly, homodimer. Polymerizes to form a dynamic ring structure in a strictly GTP-dependent manner. Interacts directly with several other division proteins.

The protein localises to the cytoplasm. Functionally, essential cell division protein that forms a contractile ring structure (Z ring) at the future cell division site. The regulation of the ring assembly controls the timing and the location of cell division. One of the functions of the FtsZ ring is to recruit other cell division proteins to the septum to produce a new cell wall between the dividing cells. Binds GTP and shows GTPase activity. This is Cell division protein FtsZ from Mycobacterium bovis (strain ATCC BAA-935 / AF2122/97).